Reading from the N-terminus, the 77-residue chain is U8-lycotoxin-Ls1s (77 aa).

The N-terminal stretch at 1–20 (MKLIIFTGLVLFAIVSLIEA) is a signal peptide. Residues 21-26 (QAENER) constitute a propeptide that is removed on maturation.

This sequence belongs to the neurotoxin 19 (CSTX) family. 08 (U8-Lctx) subfamily. Contains 4 disulfide bonds. Expressed by the venom gland.

Its subcellular location is the secreted. The sequence is that of U8-lycotoxin-Ls1s from Lycosa singoriensis (Wolf spider).